Consider the following 356-residue polypeptide: Nucleosome assembly protein 1;4 (356 aa).

The stretch at 34–88 forms a coiled coil; that stretch reads VNALKNKLQNLAGQHSDILETLTPQVRKRVDVLRELQSQHDELESHFFEERAALE. A Nuclear export signal motif is present at residues 55–70; that stretch reads LTPQVRKRVDVLRELQ. Positions 230-235 match the Nuclear localization signal motif; it reads KKKPKK. Residues 304 to 356 are disordered; the sequence is FTGEAAEGDEFEDIEDDDDDDDDDDDEDDEDEEDEDDEEEEKSKKKSSALKVE. Acidic residues predominate over residues 309–343; it reads AEGDEFEDIEDDDDDDDDDDDEDDEDEEDEDDEEE. The span at 347–356 shows a compositional bias: basic residues; that stretch reads KKKSSALKVE.

The protein belongs to the nucleosome assembly protein (NAP) family. Can form homomeric and heteromeric protein complexes with NAP1;3. Binds histones H2A and H2B in vivo. Also able to bind histones H1 and H4 in vitro. Interacts with CYCB1;1 and with alpha tubulin.

The protein localises to the nucleus. Its subcellular location is the cytoplasm. In terms of biological role, may modulate chromatin structure by regulation of nucleosome assembly/disassembly. Could function together with B-type cyclins in the regulation of microtubule dynamics. The chain is Nucleosome assembly protein 1;4 (NAP1;4) from Nicotiana tabacum (Common tobacco).